A 435-amino-acid chain; its full sequence is MKRVSQMTALAMALGLACASSWAAELAKPLTLDQLQQQNGKAIDTRPSAFYNGWPQTLNGPSGHELAALNLSASWLDKMSTEQLNAWIKQHNLKTDAPVALYGNDKDVDAVKTRLQKAGLTHISILSDALSEPSRLQKLPHFEQLVYPQWLHDLQQGKEVTAKPAGDWKVIEAAWGAPKLYLISHIPGADYIDTNEVESEPLWNKVSDEQLKAMLAKHGIRHDTTVILYGRDVYAAARVAQIMLYAGVKDVRLLDGGWQTWSDAGLPVERGTPPKVKAEPDFGVKIPAQPQLMLDMEQARGLLHRQDASLVSIRSWPEFIGTTSGYSYIKPKGEIAGARWGHAGSDSTHMEDFHNPDGTMRSADDITAMWKAWNIKPEQQVSFYCGTGWRASETFMYARAMGWKNVSVYDGGWYEWSSDPKNPVATGERGPDSSK.

An N-terminal signal peptide occupies residues 1-23; the sequence is MKRVSQMTALAMALGLACASSWA. Rhodanese domains lie at 36 to 138, 164 to 270, and 304 to 425; these read QQQN…RLQK, PAGD…PVER, and HRQD…NPVA. The active-site Cysteine persulfide intermediate is the Cys385. Residue Arg390 coordinates substrate.

As to quaternary structure, monomer.

It is found in the periplasm. The catalysed reaction is thiosulfate + hydrogen cyanide = thiocyanate + sulfite + 2 H(+). The protein is Thiosulfate sulfurtransferase YnjE (ynjE) of Escherichia coli (strain K12).